The primary structure comprises 125 residues: Fluoride-specific ion channel FluC (125 aa).

The next 4 helical transmembrane spans lie at 4-24 (WLFV…ISEL), 35-55 (YGTL…FALI), 69-89 (LMVG…DTVV), and 103-123 (MGLN…LVAS). Residues Gly-75 and Thr-78 each coordinate Na(+).

This sequence belongs to the fluoride channel Fluc/FEX (TC 1.A.43) family.

It localises to the cell inner membrane. It catalyses the reaction fluoride(in) = fluoride(out). Its activity is regulated as follows. Na(+) is not transported, but it plays an essential structural role and its presence is essential for fluoride channel function. Functionally, fluoride-specific ion channel. Important for reducing fluoride concentration in the cell, thus reducing its toxicity. The sequence is that of Fluoride-specific ion channel FluC from Aeromonas salmonicida (strain A449).